The sequence spans 189 residues: Elongation factor P (189 aa).

This sequence belongs to the elongation factor P family.

The protein resides in the cytoplasm. It functions in the pathway protein biosynthesis; polypeptide chain elongation. Involved in peptide bond synthesis. Stimulates efficient translation and peptide-bond synthesis on native or reconstituted 70S ribosomes in vitro. Probably functions indirectly by altering the affinity of the ribosome for aminoacyl-tRNA, thus increasing their reactivity as acceptors for peptidyl transferase. The sequence is that of Elongation factor P from Phytoplasma australiense.